A 295-amino-acid polypeptide reads, in one-letter code: Transmembrane protein 71 (295 aa).

2 consecutive transmembrane segments (helical) span residues 229–249 (LLQEVFFQAILLAVCLIISAC) and 253–273 (FMGEILASVFTCSLMITVAYV).

The protein belongs to the TMEM71 family.

It is found in the membrane. In Homo sapiens (Human), this protein is Transmembrane protein 71 (TMEM71).